The sequence spans 322 residues: tRNA U34 carboxymethyltransferase (322 aa).

Carboxy-S-adenosyl-L-methionine-binding positions include lysine 91, tryptophan 105, lysine 110, glycine 129, 179 to 180 (LE), methionine 195, tyrosine 199, and arginine 314.

This sequence belongs to the class I-like SAM-binding methyltransferase superfamily. CmoB family. As to quaternary structure, homotetramer.

It catalyses the reaction carboxy-S-adenosyl-L-methionine + 5-hydroxyuridine(34) in tRNA = 5-carboxymethoxyuridine(34) in tRNA + S-adenosyl-L-homocysteine + H(+). In terms of biological role, catalyzes carboxymethyl transfer from carboxy-S-adenosyl-L-methionine (Cx-SAM) to 5-hydroxyuridine (ho5U) to form 5-carboxymethoxyuridine (cmo5U) at position 34 in tRNAs. This Pseudomonas paraeruginosa (strain DSM 24068 / PA7) (Pseudomonas aeruginosa (strain PA7)) protein is tRNA U34 carboxymethyltransferase.